An 82-amino-acid chain; its full sequence is Delta-actitoxin-Aeq2b 3 (82 aa).

An N-terminal signal peptide occupies residues 1–19 (MNRLMILVFAAVILALASA). A propeptide spanning residues 20–26 (DEDVDIT) is cleaved from the precursor. Intrachain disulfides connect Cys-32/Cys-79, Cys-34/Cys-69, and Cys-62/Cys-80.

This sequence belongs to the sea anemone sodium channel inhibitory toxin family. Type I subfamily.

It is found in the secreted. The protein resides in the nematocyst. Its function is as follows. Binds specifically to voltage-gated sodium channels (Nav), thereby delaying their inactivation during signal transduction. Causes death to crabs. In Actinia equina (Beadlet anemone), this protein is Delta-actitoxin-Aeq2b 3.